The chain runs to 439 residues: Ribulose bisphosphate carboxylase/oxygenase activase 2, chloroplastic (439 aa).

A chloroplast-targeting transit peptide spans 1-58 (MATSVSTIGAANKAPLSLNNSVAGTSVPSTAFFGKTLKKVYGKGVSSPKVTNRSLRIA). 169 to 176 (GGKGQGKS) is an ATP binding site.

This sequence belongs to the RuBisCO activase family.

The protein localises to the plastid. It is found in the chloroplast stroma. Functionally, activation of RuBisCO (ribulose-1,5-bisphosphate carboxylase/oxygenase; EC 4.1.1.39) involves the ATP-dependent carboxylation of the epsilon-amino group of lysine leading to a carbamate structure. This chain is Ribulose bisphosphate carboxylase/oxygenase activase 2, chloroplastic (RCA), found in Nicotiana tabacum (Common tobacco).